A 419-amino-acid polypeptide reads, in one-letter code: Elongation factor Tu, chloroplastic (419 aa).

Residues 10-214 (KPHVNIGTIG…KVDEYIPTPD (205 aa)) form the tr-type G domain. Positions 19 to 26 (GHVDHGKT) are G1. 19 to 26 (GHVDHGKT) contributes to the GTP binding site. Mg(2+) is bound at residue T26. The interval 60-64 (GITIN) is G2. Positions 81–84 (DCPG) are G3. GTP is bound by residues 81–85 (DCPGH) and 136–139 (NKED). The G4 stretch occupies residues 136 to 139 (NKED). A G5 region spans residues 174-176 (SAL).

Belongs to the TRAFAC class translation factor GTPase superfamily. Classic translation factor GTPase family. EF-Tu/EF-1A subfamily.

The protein resides in the plastid. It is found in the chloroplast. The catalysed reaction is GTP + H2O = GDP + phosphate + H(+). Its function is as follows. GTP hydrolase that promotes the GTP-dependent binding of aminoacyl-tRNA to the A-site of ribosomes during protein biosynthesis. The protein is Elongation factor Tu, chloroplastic (tufA) of Tetradesmus obliquus (Green alga).